A 687-amino-acid chain; its full sequence is Mitochondrial 15S rRNA processing factor ppr3 (687 aa).

Residues 1–49 constitute a mitochondrion transit peptide; the sequence is MLNKCSGSLTLLAVRRFCGPCRRLHYHKDNPNNINIAKNLLNNNIQARC. PPR repeat units follow at residues 262 to 296, 297 to 331, 334 to 368, and 372 to 407; these read NGLV…SITP, SKDF…ATSI, SAET…PIDP, and TTFV…GLRP.

This sequence belongs to the CCM1 family. As to quaternary structure, binds to mitochondrial small subunit 15S rRNA.

The protein resides in the mitochondrion. Regulates mitochondrial small subunit maturation by controlling 15S rRNA 5'-end processing. Localizes to the 5' precursor of the 15S rRNA in a position that is subsequently occupied by mS47 in the mature yeast mtSSU. Uses structure and sequence-specific RNA recognition, binding to a single-stranded region of the precursor and specifically recognizing bases -6 to -1. The exchange of Ccm1 for mS47 is coupled to the irreversible removal of precursor rRNA that is accompanied by conformational changes of the mitoribosomal proteins uS5m and mS26. These conformational changes signal completion of 5'-end rRNA processing through protection of the mature 5'-end of the 15S rRNA and stabilization of mS47. The removal of the 5' precursor together with the dissociation of Ccm1 may be catalyzed by the 5'-3' exoribonuclease Pet127. Involved in the specific removal of group I introns in mitochondrial encoded transcripts. The chain is Mitochondrial 15S rRNA processing factor ppr3 from Schizosaccharomyces pombe (strain 972 / ATCC 24843) (Fission yeast).